The following is a 229-amino-acid chain: MTPKLIVALDFDNQDNAIQLVEKLDPNHCALKVGSELFTLLGPQFVKALVRREFKVFLDLKFHDIPNTVAKACHSAAELGVWMINVHAIGGLKMLQAARESLKTYGKDRPLLIAVTVLTSFEEGELASVGISNTLPEQATHLAMLAREAGLDGVVSSAHEVKIIKQKCGENFITVTPGIRLPNNLKDDQSRVMTPQQAIREGSDFLVIGRPITQASNPYEVVSALLRDL.

Substrate-binding positions include aspartate 10, lysine 32, 59–68 (DLKFHDIPNT), threonine 119, arginine 180, glutamine 189, glycine 209, and arginine 210. Residue lysine 61 is the Proton donor of the active site.

The protein belongs to the OMP decarboxylase family. Type 1 subfamily. In terms of assembly, homodimer.

The enzyme catalyses orotidine 5'-phosphate + H(+) = UMP + CO2. It participates in pyrimidine metabolism; UMP biosynthesis via de novo pathway; UMP from orotate: step 2/2. Catalyzes the decarboxylation of orotidine 5'-monophosphate (OMP) to uridine 5'-monophosphate (UMP). This Legionella pneumophila subsp. pneumophila (strain Philadelphia 1 / ATCC 33152 / DSM 7513) protein is Orotidine 5'-phosphate decarboxylase.